A 226-amino-acid polypeptide reads, in one-letter code: Fibrillarin-like rRNA/tRNA 2'-O-methyltransferase (226 aa).

Residues 82–83, 100–101, 125–126, and 145–148 each bind S-adenosyl-L-methionine; these read TT, EF, DA, and DVAQ.

This sequence belongs to the methyltransferase superfamily. Fibrillarin family. In terms of assembly, interacts with nop5. Component of box C/D small ribonucleoprotein (sRNP) particles that contain rpl7ae, FlpA and nop5, plus a guide RNA.

Functionally, involved in pre-rRNA and tRNA processing. Utilizes the methyl donor S-adenosyl-L-methionine to catalyze the site-specific 2'-hydroxyl methylation of ribose moieties in rRNA and tRNA. Site specificity is provided by a guide RNA that base pairs with the substrate. Methylation occurs at a characteristic distance from the sequence involved in base pairing with the guide RNA. This chain is Fibrillarin-like rRNA/tRNA 2'-O-methyltransferase, found in Methanosarcina barkeri (strain Fusaro / DSM 804).